The sequence spans 318 residues: uncharacterized protein (318 aa).

This is an uncharacterized protein from Ostreid herpesvirus 1 (isolate France) (OsHV-1).